Consider the following 239-residue polypeptide: Probable 2-phosphosulfolactate phosphatase (239 aa).

This sequence belongs to the ComB family. Mg(2+) serves as cofactor.

It carries out the reaction (2R)-O-phospho-3-sulfolactate + H2O = (2R)-3-sulfolactate + phosphate. The chain is Probable 2-phosphosulfolactate phosphatase from Clostridium botulinum (strain Langeland / NCTC 10281 / Type F).